Here is a 105-residue protein sequence, read N- to C-terminus: uncharacterized protein (105 aa).

The disordered stretch occupies residues 1-27 (MQSPAMKRIKSSSHSRWDGSGSVNEMP).

The protein resides in the mitochondrion. This is an uncharacterized protein from Arabidopsis thaliana (Mouse-ear cress).